The primary structure comprises 463 residues: NF-kappa-B-activating protein (463 aa).

A compositionally biased stretch (basic residues) spans 1 to 14; it reads MRSRSRSRSRQRER. A disordered region spans residues 1–358; it reads MRSRSRSRSR…GGSLNQKDFG (358 aa). 2 stretches are compositionally biased toward basic and acidic residues: residues 15–29 and 39–71; these read RRSD…ERRT and VSRE…DAVP. Over residues 78 to 98 the composition is skewed to low complexity; sequence SSPSRSSSSSSSDRSSSSRSP. Positions 107–125 are enriched in basic and acidic residues; the sequence is KSVERWPNDRYHENNDRRQ. S136, S189, and S191 each carry phosphoserine. T195 carries the post-translational modification Phosphothreonine. Positions 208-238 are enriched in basic residues; the sequence is PKKKKKKGKRKHKKSEKKSKKKSKKSKKKKS. Positions 241-267 are enriched in low complexity; it reads ESSSSSSSSSSEDSSDESSSSSSSSSS. A compositionally biased stretch (acidic residues) spans 268-278; sequence DSEDESEEEDV. The segment covering 279-288 has biased composition (basic and acidic residues); that stretch reads WLEKTADGIK. The span at 289–312 shows a compositional bias: basic residues; the sequence is KPKKKKSSTSKKDKKSKKKKKKRK. Over residues 330–340 the composition is skewed to basic and acidic residues; it reads KNKESASHNDE.

This sequence belongs to the NKAP family.

Its subcellular location is the nucleus. Tumor suppressor involved in maintaining genome integrity. Influences gene expression and mRNA splicing. The polypeptide is NF-kappa-B-activating protein (Drosophila melanogaster (Fruit fly)).